The following is a 185-amino-acid chain: Potassium-transporting ATPase KdpC subunit (185 aa).

A helical transmembrane segment spans residues 11–31 (LALLMTLVTGALYPLAVTGIA).

Belongs to the KdpC family. As to quaternary structure, the system is composed of three essential subunits: KdpA, KdpB and KdpC.

The protein localises to the cell inner membrane. Part of the high-affinity ATP-driven potassium transport (or Kdp) system, which catalyzes the hydrolysis of ATP coupled with the electrogenic transport of potassium into the cytoplasm. This subunit acts as a catalytic chaperone that increases the ATP-binding affinity of the ATP-hydrolyzing subunit KdpB by the formation of a transient KdpB/KdpC/ATP ternary complex. This is Potassium-transporting ATPase KdpC subunit from Pseudomonas putida (strain ATCC 47054 / DSM 6125 / CFBP 8728 / NCIMB 11950 / KT2440).